Here is a 548-residue protein sequence, read N- to C-terminus: Synaptic vesicle 2-related protein (548 aa).

The Cytoplasmic portion of the chain corresponds to 1 to 87 (MEEDLFQLRQ…GFGRFQWKLS (87 aa)). Phosphoserine occurs at positions 25 and 31. A helical transmembrane segment spans residues 88–108 (VLTGLAWMADAMEMMILSILA). The Vesicular segment spans residues 109-122 (PQLHCEWRLPSWQV). Residues 123 to 143 (ALLTSVVFIGMMSSSTLWGNI) form a helical membrane-spanning segment. The Cytoplasmic portion of the chain corresponds to 144–156 (SDQYGRKTGLKIS). A helical membrane pass occupies residues 157 to 177 (VFWTLYYGILSAFAPVYSWIL). Residues 178 to 180 (VLR) lie on the Vesicular side of the membrane. The helical transmembrane segment at 181 to 201 (GLVGFGIGGVPQSVTLYAEFL) threads the bilayer. Over 202–209 (PMKARAKC) the chain is Cytoplasmic. The chain crosses the membrane as a helical span at residues 210 to 230 (ILLIEVFWAIGTVFEVLLAVF). Residues 231-238 (VMPSLGWR) are Vesicular-facing. A helical membrane pass occupies residues 239-259 (WLLLLSAAPLLVFAVLCFWLP). Residues 260-316 (ESARYDVLSGNQEKAIATLKRIATENGAPMPLGKLIISRQEDRGKMRDLFTPHFRWT) are Cytoplasmic-facing. A helical transmembrane segment spans residues 317-337 (TLLLWFIWFSNAFSYYGLVLL). Topologically, residues 338–373 (TTELFQAGDVCSISSRKKAVEAKCSLACEYLSKEDY) are vesicular. A helical transmembrane segment spans residues 374–394 (MDLLWTTLSEFPGVLVTLWVI). Residues 395 to 401 (DRLGRKK) lie on the Cytoplasmic side of the membrane. The helical transmembrane segment at 402–422 (TMALCFVIFSLCSLLLFICIG) threads the bilayer. Residues 423–424 (RN) are Vesicular-facing. The helical transmembrane segment at 425-445 (VLTLLLFIARAFISGGFQAAY) threads the bilayer. Residues 446–457 (VYTPEVYPTATR) lie on the Cytoplasmic side of the membrane. A helical transmembrane segment spans residues 458–478 (ALGLGTCSGMARVGALITPFI). Residues 479-489 (AQVMLESSVYL) are Vesicular-facing. The helical transmembrane segment at 490–510 (TLAVYSGCCLLAALASCFLPI) threads the bilayer. Residues 511 to 548 (ETKGRALQESSHREWGQEMVGRGTNSTGVPRSNSGSQE) lie on the Cytoplasmic side of the membrane. Residues 523-548 (REWGQEMVGRGTNSTGVPRSNSGSQE) form a disordered region. Positions 533–548 (GTNSTGVPRSNSGSQE) are enriched in polar residues. Ser-542 is modified (phosphoserine).

Belongs to the major facilitator superfamily. Detected in brain (at protein level). Detected in brain, in synaptic layers of the cerebellum, hippocampus and cerebral cortex.

Its subcellular location is the cytoplasmic vesicle. The protein localises to the secretory vesicle. It localises to the synaptic vesicle membrane. The chain is Synaptic vesicle 2-related protein (Svop) from Rattus norvegicus (Rat).